Here is a 242-residue protein sequence, read N- to C-terminus: Probable septum site-determining protein MinC (242 aa).

This sequence belongs to the MinC family. Interacts with MinD and FtsZ.

In terms of biological role, cell division inhibitor that blocks the formation of polar Z ring septums. Rapidly oscillates between the poles of the cell to destabilize FtsZ filaments that have formed before they mature into polar Z rings. Prevents FtsZ polymerization. The polypeptide is Probable septum site-determining protein MinC (Thioalkalivibrio sulfidiphilus (strain HL-EbGR7)).